Here is a 405-residue protein sequence, read N- to C-terminus: Phosphopentomutase (405 aa).

6 residues coordinate Mn(2+): Asp10, Asp303, His308, Asp344, His345, and His356.

Belongs to the phosphopentomutase family. Mn(2+) serves as cofactor.

It localises to the cytoplasm. The catalysed reaction is 2-deoxy-alpha-D-ribose 1-phosphate = 2-deoxy-D-ribose 5-phosphate. The enzyme catalyses alpha-D-ribose 1-phosphate = D-ribose 5-phosphate. Its pathway is carbohydrate degradation; 2-deoxy-D-ribose 1-phosphate degradation; D-glyceraldehyde 3-phosphate and acetaldehyde from 2-deoxy-alpha-D-ribose 1-phosphate: step 1/2. Its function is as follows. Isomerase that catalyzes the conversion of deoxy-ribose 1-phosphate (dRib-1-P) and ribose 1-phosphate (Rib-1-P) to deoxy-ribose 5-phosphate (dRib-5-P) and ribose 5-phosphate (Rib-5-P), respectively. In Shewanella denitrificans (strain OS217 / ATCC BAA-1090 / DSM 15013), this protein is Phosphopentomutase.